Reading from the N-terminus, the 245-residue chain is UDP-2,3-diacylglucosamine hydrolase (245 aa).

Mn(2+) is bound by residues aspartate 8, histidine 10, aspartate 41, asparagine 80, and histidine 115. 80-81 (NR) serves as a coordination point for substrate. Substrate contacts are provided by aspartate 123, serine 161, lysine 165, lysine 168, and histidine 196. Mn(2+)-binding residues include histidine 196 and histidine 198.

It belongs to the LpxH family. The cofactor is Mn(2+).

The protein resides in the cell inner membrane. It carries out the reaction UDP-2-N,3-O-bis[(3R)-3-hydroxytetradecanoyl]-alpha-D-glucosamine + H2O = 2-N,3-O-bis[(3R)-3-hydroxytetradecanoyl]-alpha-D-glucosaminyl 1-phosphate + UMP + 2 H(+). It participates in glycolipid biosynthesis; lipid IV(A) biosynthesis; lipid IV(A) from (3R)-3-hydroxytetradecanoyl-[acyl-carrier-protein] and UDP-N-acetyl-alpha-D-glucosamine: step 4/6. Functionally, hydrolyzes the pyrophosphate bond of UDP-2,3-diacylglucosamine to yield 2,3-diacylglucosamine 1-phosphate (lipid X) and UMP by catalyzing the attack of water at the alpha-P atom. Involved in the biosynthesis of lipid A, a phosphorylated glycolipid that anchors the lipopolysaccharide to the outer membrane of the cell. The protein is UDP-2,3-diacylglucosamine hydrolase of Psychromonas ingrahamii (strain DSM 17664 / CCUG 51855 / 37).